Reading from the N-terminus, the 168-residue chain is Phosphopantetheine adenylyltransferase (168 aa).

Ser-9 serves as a coordination point for substrate. Residues 9-10 and His-17 each bind ATP; that span reads SF. Residues Lys-41, Leu-73, and Arg-87 each contribute to the substrate site. Residues 88–90, Glu-98, and 123–129 each bind ATP; these read GLR and YAFLSSS.

It belongs to the bacterial CoaD family. Homohexamer. It depends on Mg(2+) as a cofactor.

It localises to the cytoplasm. It catalyses the reaction (R)-4'-phosphopantetheine + ATP + H(+) = 3'-dephospho-CoA + diphosphate. It functions in the pathway cofactor biosynthesis; coenzyme A biosynthesis; CoA from (R)-pantothenate: step 4/5. Its function is as follows. Reversibly transfers an adenylyl group from ATP to 4'-phosphopantetheine, yielding dephospho-CoA (dPCoA) and pyrophosphate. The polypeptide is Phosphopantetheine adenylyltransferase (Heliobacterium modesticaldum (strain ATCC 51547 / Ice1)).